We begin with the raw amino-acid sequence, 484 residues long: Glutamyl-tRNA(Gln) amidotransferase subunit A (484 aa).

Catalysis depends on charge relay system residues Lys77 and Ser152. Ser176 functions as the Acyl-ester intermediate in the catalytic mechanism.

It belongs to the amidase family. GatA subfamily. In terms of assembly, heterotrimer of A, B and C subunits.

The enzyme catalyses L-glutamyl-tRNA(Gln) + L-glutamine + ATP + H2O = L-glutaminyl-tRNA(Gln) + L-glutamate + ADP + phosphate + H(+). Functionally, allows the formation of correctly charged Gln-tRNA(Gln) through the transamidation of misacylated Glu-tRNA(Gln) in organisms which lack glutaminyl-tRNA synthetase. The reaction takes place in the presence of glutamine and ATP through an activated gamma-phospho-Glu-tRNA(Gln). The polypeptide is Glutamyl-tRNA(Gln) amidotransferase subunit A (Pseudomonas aeruginosa (strain LESB58)).